Consider the following 409-residue polypeptide: Protein a6 (409 aa).

Serine 86 carries the post-translational modification Phosphoserine. Basic residues predominate over residues 106-120 (RAHRTGRRQAPRRAA). The tract at residues 106 to 165 (RAHRTGRRQAPRRAATHSYPVTDSILITSDDEHNEQEPSSTARVRSQLSMRSPPPLAPLT) is disordered. Position 133 is a phosphothreonine (threonine 133). Position 134 is a phosphoserine (serine 134). Over residues 142–155 (EPSSTARVRSQLSM) the composition is skewed to polar residues.

This chain is Protein a6 (a6), found in Drosophila melanogaster (Fruit fly).